The following is a 536-amino-acid chain: Cytochrome P450 monooxygenase pbrC (536 aa).

A helical membrane pass occupies residues 20-39 (VMLPALVGFAFLIYQAFFAI). Residue Cys-479 coordinates heme.

Belongs to the cytochrome P450 family. Heme is required as a cofactor.

The protein localises to the membrane. Its pathway is secondary metabolite biosynthesis; terpenoid biosynthesis. Cytochrome P450 monooxygenase; part of the gene cluster that mediates the biosynthesis of the sesquiterpenoid aspterric acid (AA), an inhibitor of dihydroxy-acid dehydratase (DHAD) effective as an herbicide. PbrC catalyzes the third and last step within the pathway and converts the alpha-epoxy carboxylate intermediate produced by the cytochrome P450 monooxygenase pbrB from (-)daucane into the tricyclic aspterric acid. The polypeptide is Cytochrome P450 monooxygenase pbrC (Penicillium brasilianum).